Here is a 414-residue protein sequence, read N- to C-terminus: 3-phosphoshikimate 1-carboxyvinyltransferase (414 aa).

Residues Lys20, Ser21, and Arg25 each contribute to the 3-phosphoshikimate site. Residue Lys20 coordinates phosphoenolpyruvate. Phosphoenolpyruvate is bound by residues Gly85 and Arg113. Residues Ser154, Ser155, Gln156, Ser181, Asp296, and Lys323 each contribute to the 3-phosphoshikimate site. Gln156 is a binding site for phosphoenolpyruvate. The Proton acceptor role is filled by Asp296. Residues Arg327, Arg371, and Lys395 each contribute to the phosphoenolpyruvate site.

It belongs to the EPSP synthase family. In terms of assembly, monomer.

It localises to the cytoplasm. The enzyme catalyses 3-phosphoshikimate + phosphoenolpyruvate = 5-O-(1-carboxyvinyl)-3-phosphoshikimate + phosphate. It functions in the pathway metabolic intermediate biosynthesis; chorismate biosynthesis. Its function is as follows. Catalyzes the transfer of the enolpyruvyl moiety of phosphoenolpyruvate (PEP) to the 5-hydroxyl of shikimate-3-phosphate (S3P) to produce enolpyruvyl shikimate-3-phosphate and inorganic phosphate. The polypeptide is 3-phosphoshikimate 1-carboxyvinyltransferase (Saccharolobus islandicus (strain M.14.25 / Kamchatka #1) (Sulfolobus islandicus)).